Here is a 251-residue protein sequence, read N- to C-terminus: Triosephosphate isomerase (251 aa).

9–11 is a substrate binding site; that stretch reads NWK. Catalysis depends on H95, which acts as the Electrophile. E167 serves as the catalytic Proton acceptor. Substrate contacts are provided by residues G173, S213, and 234-235; that span reads GG.

The protein belongs to the triosephosphate isomerase family. As to quaternary structure, homodimer.

The protein resides in the cytoplasm. The catalysed reaction is D-glyceraldehyde 3-phosphate = dihydroxyacetone phosphate. Its pathway is carbohydrate biosynthesis; gluconeogenesis. The protein operates within carbohydrate degradation; glycolysis; D-glyceraldehyde 3-phosphate from glycerone phosphate: step 1/1. Its function is as follows. Involved in the gluconeogenesis. Catalyzes stereospecifically the conversion of dihydroxyacetone phosphate (DHAP) to D-glyceraldehyde-3-phosphate (G3P). This is Triosephosphate isomerase from Ligilactobacillus salivarius (strain UCC118) (Lactobacillus salivarius).